The primary structure comprises 469 residues: Adenosylhomocysteinase (469 aa).

Substrate contacts are provided by T63, D139, and E164. 165–167 (TTT) provides a ligand contact to NAD(+). The substrate site is built by K194 and D198. NAD(+) is bound by residues N199, 228–233 (GYGDVG), E251, N300, 321–323 (IGH), and N375.

The protein belongs to the adenosylhomocysteinase family. It depends on NAD(+) as a cofactor.

The protein resides in the cytoplasm. It catalyses the reaction S-adenosyl-L-homocysteine + H2O = L-homocysteine + adenosine. It functions in the pathway amino-acid biosynthesis; L-homocysteine biosynthesis; L-homocysteine from S-adenosyl-L-homocysteine: step 1/1. May play a key role in the regulation of the intracellular concentration of adenosylhomocysteine. The polypeptide is Adenosylhomocysteinase (Pseudomonas putida (strain W619)).